The sequence spans 669 residues: DNA ligase (669 aa).

Residues 31–35, 80–81, and Glu-112 contribute to the NAD(+) site; these read DSVYD and SL. Lys-114 acts as the N6-AMP-lysine intermediate in catalysis. Residues Arg-135, Glu-172, Lys-289, and Lys-313 each contribute to the NAD(+) site. Zn(2+)-binding residues include Cys-407, Cys-410, Cys-425, and Cys-430. The BRCT domain occupies 591-669; that stretch reads TDSGKLKGKT…EAEFLQLLEP (79 aa).

The protein belongs to the NAD-dependent DNA ligase family. LigA subfamily. The cofactor is Mg(2+). It depends on Mn(2+) as a cofactor.

It catalyses the reaction NAD(+) + (deoxyribonucleotide)n-3'-hydroxyl + 5'-phospho-(deoxyribonucleotide)m = (deoxyribonucleotide)n+m + AMP + beta-nicotinamide D-nucleotide.. Functionally, DNA ligase that catalyzes the formation of phosphodiester linkages between 5'-phosphoryl and 3'-hydroxyl groups in double-stranded DNA using NAD as a coenzyme and as the energy source for the reaction. It is essential for DNA replication and repair of damaged DNA. The sequence is that of DNA ligase from Synechocystis sp. (strain ATCC 27184 / PCC 6803 / Kazusa).